Here is a 132-residue protein sequence, read N- to C-terminus: Intraflagellar transport protein 20 homolog (132 aa).

Residues Met-70–Lys-132 are IFT57-binding. Residues Gly-74 to Leu-114 adopt a coiled-coil conformation.

Component of the IFT complex B, at least composed of IFT20, IFT22, IFT25, IFT27, IFT46, IFT52, TRAF3IP1/IFT54, IFT57, IFT74, IFT80, IFT81, and IFT88. Interacts directly with IFT57 and KIF3B/Kinesin II subunit. Interacts with IFT88. Interacts with CEP83. Interacts with SPEF2 (via C-terminus). Interacts with CBL and CBLB. Interacts with TRIP11. Interacts with TTC21A. Interacts with SPATA1. Interacts with USH1G. Interacts with CCDC146. Interacts with CEP78; regulating IFT20 stability and localization. As to expression, expressed in almost all tissues.

It localises to the golgi apparatus. It is found in the cis-Golgi network. Its subcellular location is the cytoplasm. The protein resides in the cytoskeleton. The protein localises to the microtubule organizing center. It localises to the centrosome. It is found in the centriole. Its subcellular location is the cilium basal body. The protein resides in the cell projection. The protein localises to the cilium. It localises to the cytoplasmic vesicle. It is found in the secretory vesicle. Its subcellular location is the acrosome. Its function is as follows. Part of intraflagellar transport (IFT) particles involved in ciliary process assembly. May play a role in the trafficking of ciliary membrane proteins from the Golgi complex to the cilium. Regulates the platelet-derived growth factor receptor-alpha (PDGFRA) signaling pathway. Required for protein stability of E3 ubiquitin ligases CBL and CBLB that mediate ubiquitination and internalization of PDGFRA for proper feedback inhibition of PDGFRA signaling. Essential for male fertility. Plays an important role in spermatogenesis, particularly spermiogenesis, when germ cells form flagella. May play a role in the transport of flagellar proteins ODF2 and SPAG16 to build sperm flagella and in the removal of redundant sperm cytoplasm. Also involved in autophagy since it is required for trafficking of ATG16L and the expansion of the autophagic compartment. This is Intraflagellar transport protein 20 homolog (IFT20) from Homo sapiens (Human).